The primary structure comprises 500 residues: DNA polymerase processivity factor (500 aa).

Positions 388-500 (VSESDDAAAE…QEPANKRGKR (113 aa)) are disordered. Residues 438 to 449 (TLQQSAQPSSPA) are compositionally biased toward polar residues.

It belongs to the herpesviridae DNA polymerase processivity factor family. Interacts with the DNA polymerase catalytic subunit UL30. Interacts with the origin-binding protein.

The protein resides in the host nucleus. Plays an essential role in viral DNA replication by acting as the polymerase accessory subunit. Associates with the viral polymerase to increase its processivity and forms high-affinity direct interactions with DNA. Facilitates the origin-binding protein UL9 loading onto DNA thus increasing its ability to assemble into a functional complex capable of unwinding duplex DNA. This is DNA polymerase processivity factor (UL42) from Amazona oratrix (yellow-headed parrot).